The primary structure comprises 148 residues: FAD synthase (148 aa).

Residues valine 14 to phenylalanine 15, histidine 19 to histidine 22, and aspartate 100 contribute to the ATP site.

It belongs to the archaeal FAD synthase family. As to quaternary structure, homodimer. A divalent metal cation is required as a cofactor.

The catalysed reaction is FMN + ATP + H(+) = FAD + diphosphate. The protein operates within cofactor biosynthesis; FAD biosynthesis; FAD from FMN: step 1/1. Catalyzes the transfer of the AMP portion of ATP to flavin mononucleotide (FMN) to produce flavin adenine dinucleotide (FAD) coenzyme. In Thermococcus sibiricus (strain DSM 12597 / MM 739), this protein is FAD synthase.